An 84-amino-acid chain; its full sequence is Conotoxin Am6.1 (84 aa).

An N-terminal signal peptide occupies residues Met1 to Ala19. A propeptide spanning residues Met20–Arg47 is cleaved from the precursor. 3 disulfide bridges follow: Cys48-Cys62, Cys55-Cys66, and Cys61-Cys71. Trp51 is subject to 6'-bromotryptophan; in Am6.1b. 4-carboxyglutamate; partial; in Am6.1b and Am6.1c occurs at positions 60 and 64. Positions Arg78 to Ile84 are excised as a propeptide.

Belongs to the conotoxin O2 family. Three forms of this peptides have been described. The unmodified Am6.1a (Am3286) is not detected in the venom; Am6.1b (Am3408) is only Trp brominated, while Am6.1c (Am3452) is both Trp brominated and Glu gamma-carboxyglutamated. Both Am6.1b and Am6.1c are detected in the venom. Expressed by the venom duct.

It localises to the secreted. In terms of biological role, gamma-conotoxins may act on voltage-gated non-specific cation pacemaker channels (HCN). The protein is Conotoxin Am6.1 of Conus amadis (Amadis cone).